A 73-amino-acid chain; its full sequence is DNA gyrase inhibitor YacG (73 aa).

Residues cysteine 12, cysteine 15, cysteine 31, and cysteine 35 each coordinate Zn(2+). Residues aspartate 47–aspartate 73 form a disordered region.

This sequence belongs to the DNA gyrase inhibitor YacG family. Interacts with GyrB. It depends on Zn(2+) as a cofactor.

Functionally, inhibits all the catalytic activities of DNA gyrase by preventing its interaction with DNA. Acts by binding directly to the C-terminal domain of GyrB, which probably disrupts DNA binding by the gyrase. This is DNA gyrase inhibitor YacG from Methylococcus capsulatus (strain ATCC 33009 / NCIMB 11132 / Bath).